The primary structure comprises 253 residues: Chitooligosaccharide deacetylase (253 aa).

The Mg(2+) site is built by histidine 61 and histidine 126.

Belongs to the YdjC deacetylase family. ChbG subfamily. In terms of assembly, homodimer. Requires Mg(2+) as cofactor.

The protein localises to the cytoplasm. It carries out the reaction N,N'-diacetylchitobiose + H2O = N-acetyl-beta-D-glucosaminyl-(1-&gt;4)-D-glucosamine + acetate. The catalysed reaction is diacetylchitobiose-6'-phosphate + H2O = N'-monoacetylchitobiose-6'-phosphate + acetate. Its pathway is glycan degradation; chitin degradation. Functionally, involved in the degradation of chitin. ChbG is essential for growth on the acetylated chitooligosaccharides chitobiose and chitotriose but is dispensable for growth on cellobiose and chitosan dimer, the deacetylated form of chitobiose. Deacetylation of chitobiose-6-P and chitotriose-6-P is necessary for both the activation of the chb promoter by the regulatory protein ChbR and the hydrolysis of phosphorylated beta-glucosides by the phospho-beta-glucosidase ChbF. Catalyzes the removal of only one acetyl group from chitobiose-6-P to yield monoacetylchitobiose-6-P, the inducer of ChbR and the substrate of ChbF. The chain is Chitooligosaccharide deacetylase from Yersinia pestis bv. Antiqua (strain Angola).